The sequence spans 177 residues: Large ribosomal subunit protein uL6 (177 aa).

This sequence belongs to the universal ribosomal protein uL6 family. Part of the 50S ribosomal subunit.

This protein binds to the 23S rRNA, and is important in its secondary structure. It is located near the subunit interface in the base of the L7/L12 stalk, and near the tRNA binding site of the peptidyltransferase center. The protein is Large ribosomal subunit protein uL6 of Pseudomonas fluorescens (strain SBW25).